A 559-amino-acid polypeptide reads, in one-letter code: Formate--tetrahydrofolate ligase (559 aa).

Position 68-75 (68-75) interacts with ATP; it reads TPAGEGKT.

Belongs to the formate--tetrahydrofolate ligase family.

It carries out the reaction (6S)-5,6,7,8-tetrahydrofolate + formate + ATP = (6R)-10-formyltetrahydrofolate + ADP + phosphate. Its pathway is one-carbon metabolism; tetrahydrofolate interconversion. This is Formate--tetrahydrofolate ligase from Mesorhizobium japonicum (strain LMG 29417 / CECT 9101 / MAFF 303099) (Mesorhizobium loti (strain MAFF 303099)).